A 412-amino-acid polypeptide reads, in one-letter code: Chorismate synthase (412 aa).

Arg40 and Arg46 together coordinate NADP(+). FMN-binding positions include 134–136 (RAS), 255–256 (QA), Gly299, 314–318 (KPIAT), and Arg340.

It belongs to the chorismate synthase family. As to quaternary structure, homotetramer. The cofactor is FMNH2.

It catalyses the reaction 5-O-(1-carboxyvinyl)-3-phosphoshikimate = chorismate + phosphate. Its pathway is metabolic intermediate biosynthesis; chorismate biosynthesis; chorismate from D-erythrose 4-phosphate and phosphoenolpyruvate: step 7/7. Functionally, catalyzes the anti-1,4-elimination of the C-3 phosphate and the C-6 proR hydrogen from 5-enolpyruvylshikimate-3-phosphate (EPSP) to yield chorismate, which is the branch point compound that serves as the starting substrate for the three terminal pathways of aromatic amino acid biosynthesis. This reaction introduces a second double bond into the aromatic ring system. The sequence is that of Chorismate synthase from Clavibacter michiganensis subsp. michiganensis (strain NCPPB 382).